We begin with the raw amino-acid sequence, 256 residues long: Pyrroloquinoline-quinone synthase (256 aa).

Belongs to the PqqC family.

The enzyme catalyses 6-(2-amino-2-carboxyethyl)-7,8-dioxo-1,2,3,4,7,8-hexahydroquinoline-2,4-dicarboxylate + 3 O2 = pyrroloquinoline quinone + 2 H2O2 + 2 H2O + H(+). It participates in cofactor biosynthesis; pyrroloquinoline quinone biosynthesis. In terms of biological role, ring cyclization and eight-electron oxidation of 3a-(2-amino-2-carboxyethyl)-4,5-dioxo-4,5,6,7,8,9-hexahydroquinoline-7,9-dicarboxylic-acid to PQQ. This chain is Pyrroloquinoline-quinone synthase, found in Rhizobium meliloti (strain 1021) (Ensifer meliloti).